Here is a 128-residue protein sequence, read N- to C-terminus: MQSSPSTLGPGRAADTCQAPPGPERPPVARARAVASSLGPASASGRVPRGLDMSAQETPQGRRFPIEAGDSPGLASAPESQDSPEPVATDQNPVRPLRRCPGCHCLTLLHVPIDVYLAMGGSPRARAT.

The disordered stretch occupies residues 1–96 (MQSSPSTLGP…VATDQNPVRP (96 aa)).

It belongs to the FAM229 family.

The polypeptide is Protein FAM229A (Fam229a) (Mus musculus (Mouse)).